Reading from the N-terminus, the 390-residue chain is uncharacterized protein (390 aa).

It belongs to the arsA ATPase family.

This is an uncharacterized protein from Streptomyces coelicolor (strain ATCC BAA-471 / A3(2) / M145).